The primary structure comprises 274 residues: Transmembrane protein 106B (274 aa).

The span at 1–11 shows a compositional bias: low complexity; sequence MGKSLSHLPLH. A disordered region spans residues 1-20; the sequence is MGKSLSHLPLHSSKEDAYDG. The N-myristoyl glycine moiety is linked to residue Gly-2. The Cytoplasmic portion of the chain corresponds to 2 to 96; sequence GKSLSHLPLH…QRLRPRRTKL (95 aa). Ser-33 bears the Phosphoserine mark. The chain crosses the membrane as a helical span at residues 97–117; sequence YVMASVFVCLLLSGLAVFFLF. The Lumenal portion of the chain corresponds to 118 to 274; it reads PRSIDVKYIG…EYLNVLQPQQ (157 aa). Asn-145, Asn-151, Asn-164, and Asn-183 each carry an N-linked (GlcNAc...) asparagine glycan. A disulfide bridge links Cys-214 with Cys-253. The N-linked (GlcNAc...) asparagine glycan is linked to Asn-256.

It belongs to the TMEM106 family. As to quaternary structure, can form homomers. Interacts (via N-terminus) with MAP6 (via C-terminus). Interacts (via C-terminus) with the vacuolar-type ATPase subunit ATP6AP1. Interacts (via N-terminus) with AP2M1 and CLTC. Interacts with TMEM106C. In terms of assembly, (Microbial infection) Interacts with SARS coronavirus-2/SARS-CoV-2 spike protein (via RBD domain). As to expression, expressed in the brain, including in the frontal cortex (at protein level). Expressed in lung epithelial cells.

It is found in the late endosome membrane. The protein resides in the lysosome membrane. It localises to the cell membrane. In terms of biological role, in neurons, involved in the transport of late endosomes/lysosomes. May be involved in dendrite morphogenesis and maintenance by regulating lysosomal trafficking. May act as a molecular brake for retrograde transport of late endosomes/lysosomes, possibly via its interaction with MAP6. In motoneurons, may mediate the axonal transport of lysosomes and axonal sorting at the initial segment. It remains unclear whether TMEM106B affects the transport of moving lysosomes in the anterograde or retrograde direction in neurites and whether it is important in the sorting of lysosomes in axons or in dendrites. In neurons, may also play a role in the regulation of lysosomal size and responsiveness to stress. Required for proper lysosomal acidification. (Microbial infection) Plays a role in human coronavirus SARS-CoV-2 infection, but not in common cold coronaviruses HCoV-229E and HCoV-OC43 infections. Involved in ACE2-independent SARS-CoV-2 cell entry. Required for post-endocytic stage of virus entry, facilitates spike-mediated membrane fusion. Virus attachment and endocytosis can also be mediated by other cell surface receptors. The sequence is that of Transmembrane protein 106B from Homo sapiens (Human).